Reading from the N-terminus, the 425-residue chain is Elongation factor 1-alpha (425 aa).

The tr-type G domain maps to lysine 5 to threonine 221. The segment at glycine 14–serine 21 is G1. Glycine 14–serine 21 provides a ligand contact to GTP. Residue serine 21 participates in Mg(2+) binding. Residues glycine 70–aspartate 74 are G2. Positions aspartate 91–glycine 94 are G3. GTP-binding positions include aspartate 91–histidine 95 and asparagine 146–aspartate 149. A G4 region spans residues asparagine 146–aspartate 149. The G5 stretch occupies residues serine 185–phenylalanine 187.

Belongs to the TRAFAC class translation factor GTPase superfamily. Classic translation factor GTPase family. EF-Tu/EF-1A subfamily.

The protein localises to the cytoplasm. The catalysed reaction is GTP + H2O = GDP + phosphate + H(+). In terms of biological role, GTP hydrolase that promotes the GTP-dependent binding of aminoacyl-tRNA to the A-site of ribosomes during protein biosynthesis. In Methanoculleus marisnigri (strain ATCC 35101 / DSM 1498 / JR1), this protein is Elongation factor 1-alpha.